Here is a 284-residue protein sequence, read N- to C-terminus: Acetylglutamate kinase (284 aa).

Residues 64-65 (GG), R86, and N177 contribute to the substrate site.

This sequence belongs to the acetylglutamate kinase family. ArgB subfamily.

It localises to the cytoplasm. It carries out the reaction N-acetyl-L-glutamate + ATP = N-acetyl-L-glutamyl 5-phosphate + ADP. Its pathway is amino-acid biosynthesis; L-arginine biosynthesis; N(2)-acetyl-L-ornithine from L-glutamate: step 2/4. Its function is as follows. Catalyzes the ATP-dependent phosphorylation of N-acetyl-L-glutamate. This is Acetylglutamate kinase from Haemophilus ducreyi (strain 35000HP / ATCC 700724).